The chain runs to 329 residues: Serpentine receptor class alpha-2 (329 aa).

The next 7 helical transmembrane spans lie at 25 to 45, 57 to 77, 104 to 124, 144 to 164, 188 to 208, 240 to 260, and 273 to 293; these read FVYL…VKIL, ILLV…GIEA, YYKI…GLLI, CAVI…LIVW, HYFT…TFIL, FLTV…IVLV, and LLVV…VILV.

The protein belongs to the nematode receptor-like protein sra family.

It is found in the membrane. The sequence is that of Serpentine receptor class alpha-2 (sra-2) from Caenorhabditis elegans.